We begin with the raw amino-acid sequence, 175 residues long: Bifunctional protein PyrR (175 aa).

Residues 97–109 carry the PRPP-binding motif; it reads IVLIDDVLFTGRT.

Belongs to the purine/pyrimidine phosphoribosyltransferase family. PyrR subfamily. In terms of assembly, homodimer and homohexamer; in equilibrium.

The catalysed reaction is UMP + diphosphate = 5-phospho-alpha-D-ribose 1-diphosphate + uracil. In terms of biological role, regulates transcriptional attenuation of the pyrimidine nucleotide (pyr) operon by binding in a uridine-dependent manner to specific sites on pyr mRNA. This disrupts an antiterminator hairpin in the RNA and favors formation of a downstream transcription terminator, leading to a reduced expression of downstream genes. Its function is as follows. Also displays a weak uracil phosphoribosyltransferase activity which is not physiologically significant. In Leuconostoc mesenteroides subsp. mesenteroides (strain ATCC 8293 / DSM 20343 / BCRC 11652 / CCM 1803 / JCM 6124 / NCDO 523 / NBRC 100496 / NCIMB 8023 / NCTC 12954 / NRRL B-1118 / 37Y), this protein is Bifunctional protein PyrR.